The chain runs to 263 residues: PDZ domain-containing protein 9 (263 aa).

The PDZ domain occupies 30-109 (QTKLTVGSMG…GTILQIKVYR (80 aa)).

The chain is PDZ domain-containing protein 9 (PDZD9) from Bos taurus (Bovine).